Consider the following 240-residue polypeptide: MADS-box protein SVP (240 aa).

The region spanning 3 to 57 is the MADS-box domain; that stretch reads REKIQIRKIDNATARQVTFSKRRRGLFKKAEELSVLCDADVALIIFSSTGKLFEF. The K-box domain maps to 87–180; that stretch reads QLVENSDHAR…GTQLTEENER (94 aa). Positions 202–240 are disordered; that stretch reads VYEEGQSSESITNAGNSTGAPVDSESSDTSLRLGLPYGG. The segment covering 206 to 220 has biased composition (polar residues); that stretch reads GQSSESITNAGNSTG.

In terms of assembly, forms a heterodimer with AP1 and SVP. Interacts with the SEU-LUG corepressor complex when complexed to AP1. Interacts with AGL15. Interacts with AGL16. Detected in roots and leaves. Expressed at very low levels in flowers and siliques. Present in floral meristems.

Its subcellular location is the nucleus. Its function is as follows. Transcription repressor that inhibit floral transition in the autonomous flowering pathway, independent of photoperiod and temperature. Acts in a dosage-dependent manner. Together with AGL24 and AP1, controls the identity of the floral meristem and regulates expression of class B, C and E genes. Promotes EFM expression to suppress flowering. This is MADS-box protein SVP from Arabidopsis thaliana (Mouse-ear cress).